The chain runs to 209 residues: Glycolipid transfer protein A (209 aa).

2 repeat units span residues 45-55 (IKADITGNITK) and 56-66 (IRSVYESNPTK). The interval 45 to 66 (IKADITGNITKIRSVYESNPTK) is 2 X 12 AA approximate tandem repeats. 48–55 (DITGNITK) contacts beta-D-galactosyl-(1-&gt;4)-beta-D-glucosyl-(1&lt;-&gt;1)-N-[(9Z)-octadecenoyl]-sphing-4-enine. 2 residues coordinate beta-D-galactosyl-(1-&gt;4)-beta-D-glucosyl-(1&lt;-&gt;1)-N-[(9Z)-octadecenoyl]-sphing-4-enine: His140 and Tyr207.

Belongs to the GLTP family.

Its subcellular location is the cytoplasm. Functionally, accelerates the intermembrane transfer of various glycolipids. Catalyzes the transfer of various glycosphingolipids between membranes but does not catalyze the transfer of phospholipids. May be involved in the intracellular translocation of glucosylceramides. This chain is Glycolipid transfer protein A (gltp-a), found in Xenopus laevis (African clawed frog).